The sequence spans 570 residues: Protein mom-5 (570 aa).

Residues 1 to 16 form the signal peptide; that stretch reads MHRHILILFLFGCLSA. Residues 17–230 lie on the Extracellular side of the membrane; it reads DQRLSSTSIS…FDGRVRRILR (214 aa). The FZ domain occupies 32 to 148; the sequence is STTRKCEHIT…FPVTDLCVGK (117 aa). 5 disulfides stabilise this stretch: C37–C98, C45–C91, C82–C119, C108–C145, and C112–C136. N-linked (GlcNAc...) asparagine glycosylation is present at N51. The N-linked (GlcNAc...) asparagine glycan is linked to N149. A helical transmembrane segment spans residues 231 to 251; the sequence is IWTAAWSVACFVCSLFTLVTF. Topologically, residues 252-264 are cytoplasmic; that stretch reads LVDLSRFAYPVRP. The chain crosses the membrane as a helical span at residues 265 to 285; it reads ILYLAFCYLAISTVYMIGVVG. Residues 286-319 lie on the Extracellular side of the membrane; sequence EDGFACGTYGSTPTTLVTQGGENVGCSALAVVHY. The helical transmembrane segment at 320–340 threads the bilayer; that stretch reads FFFMSSCAWWLVLCLAWFLAA. Residues 341 to 348 are Cytoplasmic-facing; sequence NLKWGAES. Residues 349–369 form a helical membrane-spanning segment; sequence IAALSPYFHAMCWGVPAVLSV. Residues 370–395 lie on the Extracellular side of the membrane; that stretch reads TVLVTNSVDGDVFTGICSVGNLNPSA. The helical transmembrane segment at 396 to 416 threads the bilayer; it reads LVYFFFTPIVVSLALGAVLLV. The Cytoplasmic segment spans residues 417–449; sequence CGIWSMIRIRSYIKLQHADVERNISKLEKLMLR. A helical transmembrane segment spans residues 450 to 470; the sequence is IGAFAIMYSLPTAMNAAIMWY. Residues 471-515 are Extracellular-facing; the sequence is QAVNMPAWLEGWLHHRCVRLQDRELFGFTYPVDDCPMDPKVAAPE. The chain crosses the membrane as a helical span at residues 516 to 536; that stretch reads IIVFLLKYVSQLVVGITCAIW. The Cytoplasmic segment spans residues 537 to 570; it reads VVSSKTLSSYHKAYLALSSRSPTVPAHVDQVNMR.

The protein belongs to the G-protein coupled receptor Fz/Smo family.

Its subcellular location is the cell membrane. It is found in the early endosome. Its function is as follows. Receptor for Wnt proteins. Most frizzled receptors are coupled to the beta-catenin canonical signaling pathway, which leads to the activation of disheveled proteins, inhibition of gsk-3 kinase, nuclear accumulation of beta-catenin and activation of Wnt target genes. A second signaling pathway involving PKC and calcium fluxes has been seen for some family members, but it is not yet clear if it represents a distinct pathway or if it can be integrated in the canonical pathway, as pkc seems to be required for Wnt-mediated inactivation of gsk-3 kinase. Both pathways seem to involve interactions with G-proteins. Required in embryonic development for the correct positioning and orientation of the mitotic spindles and division planes in blastomere cells. During early embryonic cell divisions, directs the asymmetric positioning of transcription factors such as pop-1 and dsh-2 in daughter cells in order to determine cell fate specification. Acts redundantly with other Wnt receptors such as lin-17 to control vulval precursor cell specification and also the polarity of different cell types including distal tip cells, seam cells, AVG interneurons and P-cells and their descendants. Plays a role in the migration of cell types including distal tip cells and the QR neuroblast descendants, QR.p and QR.pa during larval development. Negatively regulates the unc-6/Netrin receptors unc-5 and unc-40 to control distal tip cell polarity and migration. Acts through ced-5/DOCK180 and ced-10/Rac to control both distal tip cell migration and the phagocytic clearance of apoptotic cell corpses. Furthermore, it is also required for the migration and axon guidance of the different neuronal cell types including CAN, ALM, HSN and the two mechanosensory neurons AVM and PVM. Mediates Wnt receptor cfz-2 in directing ALM migration, but may also act redundantly with the Wnt receptors cfz-2 and mig-1 to direct the migration of other neuronal cell types including CAN and HSN. Mediates Wnt ligand egl-20 in the control of the anterior-posterior axon guidance of AVM and PVM neurons. The sequence is that of Protein mom-5 from Caenorhabditis elegans.